A 420-amino-acid polypeptide reads, in one-letter code: uncharacterized protein (420 aa).

The signal sequence occupies residues 1–25 (MRYAMNKIPALLLVGALIIATVASG). C26 bears the N-acetylcysteine mark. Residue C26 is the site of S-archaeol cysteine attachment.

Belongs to the bacterial solute-binding protein 1 family.

It localises to the cell membrane. Probably part of a binding-protein-dependent transport system PH1036/38/39. This is an uncharacterized protein from Pyrococcus horikoshii (strain ATCC 700860 / DSM 12428 / JCM 9974 / NBRC 100139 / OT-3).